A 480-amino-acid polypeptide reads, in one-letter code: Bindin (480 aa).

An N-terminal signal peptide occupies residues 1–20 (MDSQVLPLILLIIVFAASSA). Positions 21–247 (HGHFPHRTNQ…GEMRAERQRR (227 aa)) are excised as a propeptide. Residues 161-211 (AEMRHRRSAKDDDVNKRASPRKGSSPAGKKVQIMEQDAGKGDAHNEKEVVK) form a disordered region. Basic and acidic residues predominate over residues 197–211 (DAGKGDAHNEKEVVK). A fucose-binding domain region spans residues 377–385 (LRHLRHHSN). The helical transmembrane segment at 431 to 451 (GAGAVAGAAMAAGMPPYPGGA) threads the bilayer. The interval 452 to 480 (QGGMRVGGQPQNPMGGNAYNPMTGYRQQG) is disordered.

This sequence belongs to the bindin family.

It is found in the cytoplasmic vesicle. The protein resides in the secretory vesicle. It localises to the acrosome membrane. Functionally, species-specific sea urchin sperm protein required for adhesion of sperm to the egg surface during fertilization. Bindin coats the acrosomal process after it is externalized by the acrosome reaction. It binds to sulfated, fucose-containing polysaccharides on the vitelline layer receptor proteoglycans which cover the egg plasma membrane. The sequence is that of Bindin from Arbacia punctulata (Punctuate sea urchin).